A 361-amino-acid chain; its full sequence is Chorismate synthase (361 aa).

Arginine 48 serves as a coordination point for NADP(+). FMN is bound by residues 125 to 127 (RSS), 238 to 239 (NA), glycine 278, 293 to 297 (KPTSS), and arginine 319.

It belongs to the chorismate synthase family. Homotetramer. Requires FMNH2 as cofactor.

The catalysed reaction is 5-O-(1-carboxyvinyl)-3-phosphoshikimate = chorismate + phosphate. It functions in the pathway metabolic intermediate biosynthesis; chorismate biosynthesis; chorismate from D-erythrose 4-phosphate and phosphoenolpyruvate: step 7/7. Functionally, catalyzes the anti-1,4-elimination of the C-3 phosphate and the C-6 proR hydrogen from 5-enolpyruvylshikimate-3-phosphate (EPSP) to yield chorismate, which is the branch point compound that serves as the starting substrate for the three terminal pathways of aromatic amino acid biosynthesis. This reaction introduces a second double bond into the aromatic ring system. The chain is Chorismate synthase from Aliivibrio fischeri (strain ATCC 700601 / ES114) (Vibrio fischeri).